The primary structure comprises 513 residues: Cobyric acid synthase (513 aa).

In terms of domain architecture, GATase cobBQ-type spans 252-457 (KIDIAVIRLP…LHGIFDEEGI (206 aa)). The active-site Nucleophile is the Cys333. His449 is an active-site residue.

Belongs to the CobB/CobQ family. CobQ subfamily.

It participates in cofactor biosynthesis; adenosylcobalamin biosynthesis. Its function is as follows. Catalyzes amidations at positions B, D, E, and G on adenosylcobyrinic A,C-diamide. NH(2) groups are provided by glutamine, and one molecule of ATP is hydrogenolyzed for each amidation. The protein is Cobyric acid synthase of Lachnoclostridium phytofermentans (strain ATCC 700394 / DSM 18823 / ISDg) (Clostridium phytofermentans).